We begin with the raw amino-acid sequence, 146 residues long: Oleosin (146 aa).

Ala-2 carries the N-acetylalanine modification. The next 3 membrane-spanning stretches (helical) occupy residues 22 to 42, 56 to 76, and 77 to 97; these read ILGFITLFVSGAILLLLTGLT, VLIFFSPILIPVATVLFVAVA, and GFLSAGGFGLAALSAISWLYN. The short motif at 55–66 is the Proline-knot element; the sequence is PVLIFFSPILIP.

The protein belongs to the oleosin family. In terms of tissue distribution, expressed in pollen (at protein level).

The protein resides in the lipid droplet. It localises to the membrane. The sequence is that of Oleosin from Pinus elliottii (Slash pine).